We begin with the raw amino-acid sequence, 176 residues long: RNA 2',3'-cyclic phosphodiesterase (176 aa).

The active-site Proton donor is His-28. 2 short sequence motifs (HXTX) span residues 28–31 (HITL) and 113–116 (HVTL). His-113 (proton acceptor) is an active-site residue.

This sequence belongs to the 2H phosphoesterase superfamily. ThpR family.

It carries out the reaction a 3'-end 2',3'-cyclophospho-ribonucleotide-RNA + H2O = a 3'-end 2'-phospho-ribonucleotide-RNA + H(+). In terms of biological role, hydrolyzes RNA 2',3'-cyclic phosphodiester to an RNA 2'-phosphomonoester. The sequence is that of RNA 2',3'-cyclic phosphodiesterase from Aeropyrum pernix (strain ATCC 700893 / DSM 11879 / JCM 9820 / NBRC 100138 / K1).